Here is a 408-residue protein sequence, read N- to C-terminus: LL-diaminopimelate aminotransferase (408 aa).

Substrate contacts are provided by Tyr15 and Gly42. Pyridoxal 5'-phosphate-binding positions include Tyr72, 108 to 109 (SK), Tyr132, Asn187, Tyr218, and 246 to 248 (SFS). The substrate site is built by Lys109, Tyr132, and Asn187. Lys249 bears the N6-(pyridoxal phosphate)lysine mark. Pyridoxal 5'-phosphate-binding residues include Arg257 and Asn292. Substrate contacts are provided by Asn292 and Arg388.

Belongs to the class-I pyridoxal-phosphate-dependent aminotransferase family. LL-diaminopimelate aminotransferase subfamily. Homodimer. Requires pyridoxal 5'-phosphate as cofactor.

It carries out the reaction (2S,6S)-2,6-diaminopimelate + 2-oxoglutarate = (S)-2,3,4,5-tetrahydrodipicolinate + L-glutamate + H2O + H(+). It participates in amino-acid biosynthesis; L-lysine biosynthesis via DAP pathway; LL-2,6-diaminopimelate from (S)-tetrahydrodipicolinate (aminotransferase route): step 1/1. Functionally, involved in the synthesis of meso-diaminopimelate (m-DAP or DL-DAP), required for both lysine and peptidoglycan biosynthesis. Catalyzes the direct conversion of tetrahydrodipicolinate to LL-diaminopimelate. The protein is LL-diaminopimelate aminotransferase of Prochlorococcus marinus (strain MIT 9301).